A 346-amino-acid polypeptide reads, in one-letter code: Uracil-DNA glycosylase (346 aa).

Positions 1 to 105 are disordered; sequence MSGKITDFFE…KLKNEEKSEE (105 aa). Basic and acidic residues predominate over residues 20 to 29; sequence AENKDNDKEL. Residues 30-42 show a composition bias toward low complexity; it reads TSTTTTTTTTSTT. The span at 43-64 shows a compositional bias: basic residues; that stretch reads SKKKVAAAPKKKAAVASKKRKH. Acidic residues predominate over residues 67–86; that stretch reads SDEETDKEEQQNDDDDDGEE. Asp186 serves as the catalytic Proton acceptor.

It belongs to the uracil-DNA glycosylase (UDG) superfamily. UNG family.

The protein localises to the mitochondrion. Its subcellular location is the nucleus. The catalysed reaction is Hydrolyzes single-stranded DNA or mismatched double-stranded DNA and polynucleotides, releasing free uracil.. Its function is as follows. Excises uracil residues from the DNA which can arise as a result of misincorporation of dUMP residues by DNA polymerase or due to deamination of cytosine. This chain is Uracil-DNA glycosylase (uglA), found in Dictyostelium discoideum (Social amoeba).